Reading from the N-terminus, the 50-residue chain is Large ribosomal subunit protein bL33B (50 aa).

It belongs to the bacterial ribosomal protein bL33 family.

The sequence is that of Large ribosomal subunit protein bL33B from Mycoplasmopsis agalactiae (strain NCTC 10123 / CIP 59.7 / PG2) (Mycoplasma agalactiae).